Reading from the N-terminus, the 441-residue chain is Glutamate--tRNA ligase 1 (441 aa).

The short motif at 8–18 (PSPTGYIHIGN) is the 'HIGH' region element. The 'KMSKS' region motif lies at 239–243 (ALSKR). K242 lines the ATP pocket.

The protein belongs to the class-I aminoacyl-tRNA synthetase family. Glutamate--tRNA ligase type 1 subfamily. Monomer.

The protein localises to the cytoplasm. The enzyme catalyses tRNA(Glu) + L-glutamate + ATP = L-glutamyl-tRNA(Glu) + AMP + diphosphate. Catalyzes the attachment of glutamate to tRNA(Glu) in a two-step reaction: glutamate is first activated by ATP to form Glu-AMP and then transferred to the acceptor end of tRNA(Glu). The protein is Glutamate--tRNA ligase 1 of Roseobacter denitrificans (strain ATCC 33942 / OCh 114) (Erythrobacter sp. (strain OCh 114)).